A 334-amino-acid polypeptide reads, in one-letter code: Syntaxin-18 (334 aa).

The Cytoplasmic portion of the chain corresponds to 1–308 (MAVDITLLFR…EDIREAIKNN (308 aa)). 2 disordered regions span residues 29-50 (GGAD…GDFS) and 166-225 (LSKL…GEDE). 3 stretches are compositionally biased toward basic and acidic residues: residues 33–50 (GSRD…GDFS), 166–186 (LSKL…EKSS), and 193–207 (SEEK…EKPL). Positions 242–304 (IGEMNSLFDE…KEGNEDIREA (63 aa)) constitute a t-SNARE coiled-coil homology domain. The chain crosses the membrane as a helical; Anchor for type IV membrane protein span at residues 309–329 (AGFRVWILFFLVMCSFSLLFL). Residues 330–334 (DWYDS) lie on the Vesicular side of the membrane.

It belongs to the syntaxin family. Component of a SNARE complex consisting of STX18, USE1L, BNIP1/SEC20L, and SEC22B. RINT1/TIP20L and ZW10 are associated with the complex through interaction with BNIP1/SEC20L. Interacts directly with USE1L and BNIP1/SEC20L.

It localises to the endoplasmic reticulum membrane. The protein resides in the golgi apparatus membrane. Functionally, syntaxin that may be involved in targeting and fusion of Golgi-derived retrograde transport vesicles with the ER. The polypeptide is Syntaxin-18 (Stx18) (Rattus norvegicus (Rat)).